We begin with the raw amino-acid sequence, 1235 residues long: High-affinity potassium transport protein (1235 aa).

Phosphoserine is present on serine 15. Helical transmembrane passes span serine 49–tyrosine 70 and isoleucine 78–isoleucine 98. Asparagine 100 carries an N-linked (GlcNAc...) asparagine glycan. Residues isoleucine 107–phenylalanine 127 form a helical membrane-spanning segment. Disordered stretches follow at residues leucine 161–aspartate 310, glutamate 323–tyrosine 344, lysine 361–proline 441, and arginine 488–glutamine 565. A compositionally biased stretch (polar residues) spans arginine 164–proline 179. The N-linked (GlcNAc...) asparagine glycan is linked to asparagine 169. Residues valine 198–arginine 217 show a composition bias toward basic and acidic residues. The segment covering serine 219–serine 232 has biased composition (low complexity). N-linked (GlcNAc...) asparagine glycosylation is found at asparagine 222 and asparagine 227. Residues valine 237 to glutamate 247 are compositionally biased toward acidic residues. A compositionally biased stretch (polar residues) spans tyrosine 248 to lysine 274. Asparagine 251 is a glycosylation site (N-linked (GlcNAc...) asparagine). Residues asparagine 369 and asparagine 383 are each glycosylated (N-linked (GlcNAc...) asparagine). 2 stretches are compositionally biased toward polar residues: residues glutamate 370–glycine 415 and serine 490–valine 502. Residue serine 414 is modified to Phosphoserine. Residues asparagine 497, asparagine 501, and asparagine 532 are each glycosylated (N-linked (GlcNAc...) asparagine). The span at aspartate 510 to glutamate 539 shows a compositional bias: acidic residues. The residue at position 534 (serine 534) is a Phosphoserine. A compositionally biased stretch (basic and acidic residues) spans arginine 540–glutamine 563. 2 N-linked (GlcNAc...) asparagine glycosylation sites follow: asparagine 580 and asparagine 677. Residues histidine 671–proline 706 are disordered. A compositionally biased stretch (polar residues) spans glutamate 680–proline 706. Transmembrane regions (helical) follow at residues isoleucine 778–leucine 800, valine 813–leucine 834, serine 838–isoleucine 858, glycine 862–serine 882, and cysteine 898–leucine 918. N-linked (GlcNAc...) asparagine glycosylation is present at asparagine 919. Helical transmembrane passes span tryptophan 923–tyrosine 943 and serine 971–isoleucine 991. A disordered region spans residues glycine 1003 to asparagine 1063. The segment covering glycine 1010–glutamate 1031 has biased composition (acidic residues). Asparagine 1030 carries N-linked (GlcNAc...) asparagine glycosylation. Low complexity predominate over residues glutamine 1036 to asparagine 1049. The next 2 membrane-spanning stretches (helical) occupy residues glutamine 1078–glycine 1098 and isoleucine 1111–tyrosine 1131. Asparagine 1135 is a glycosylation site (N-linked (GlcNAc...) asparagine).

This sequence belongs to the TrkH potassium transport family.

It localises to the membrane. This protein is required for high-affinity potassium transport. This Saccharomyces cerevisiae (strain ATCC 204508 / S288c) (Baker's yeast) protein is High-affinity potassium transport protein (TRK1).